The primary structure comprises 439 residues: Ribosomal protein uS12 methylthiotransferase RimO (439 aa).

In terms of domain architecture, MTTase N-terminal spans 7–122 (QTIAVIALGC…LPDLVFGKNF (116 aa)). [4Fe-4S] cluster contacts are provided by Cys16, Cys52, Cys85, Cys155, Cys159, and Cys162. The Radical SAM core domain maps to 141 to 369 (SSTIPSAYLK…NAQYNIFQAK (229 aa)).

Belongs to the methylthiotransferase family. RimO subfamily. [4Fe-4S] cluster serves as cofactor.

The protein resides in the cytoplasm. The catalysed reaction is L-aspartate(89)-[ribosomal protein uS12]-hydrogen + (sulfur carrier)-SH + AH2 + 2 S-adenosyl-L-methionine = 3-methylsulfanyl-L-aspartate(89)-[ribosomal protein uS12]-hydrogen + (sulfur carrier)-H + 5'-deoxyadenosine + L-methionine + A + S-adenosyl-L-homocysteine + 2 H(+). Its function is as follows. Catalyzes the methylthiolation of an aspartic acid residue of ribosomal protein uS12. The chain is Ribosomal protein uS12 methylthiotransferase RimO from Endomicrobium trichonymphae.